We begin with the raw amino-acid sequence, 121 residues long: MDELNIEIVAVDRKIWSGKGTFLFTRTTAGEIGILPRHIPMVAQLVDDNMVRIEREGEKDLRVAVDGGFLSVTEERVSILAESAEFDSEIDENAAKQDAESDDPRIAARGRARLRAVGAID.

This sequence belongs to the ATPase epsilon chain family. As to quaternary structure, F-type ATPases have 2 components, CF(1) - the catalytic core - and CF(0) - the membrane proton channel. CF(1) has five subunits: alpha(3), beta(3), gamma(1), delta(1), epsilon(1). CF(0) has three main subunits: a, b and c.

The protein resides in the cell membrane. Produces ATP from ADP in the presence of a proton gradient across the membrane. This is ATP synthase epsilon chain from Mycobacterium leprae (strain Br4923).